A 257-amino-acid polypeptide reads, in one-letter code: Granzyme M (257 aa).

The N-terminal stretch at 1–23 is a signal peptide; it reads MEACVSSLLVLALGALSVGSSFG. A propeptide spans 24–25 (activation peptide); that stretch reads TQ. The Peptidase S1 domain maps to 26 to 254; it reads IIGGREVIPH…YVSWIRKVTG (229 aa). Cys-51 and Cys-67 form a disulfide bridge. Active-site charge relay system residues include His-66 and Asp-111. 3 cysteine pairs are disulfide-bonded: Cys-145-Cys-213, Cys-176-Cys-192, and Cys-203-Cys-230. N-linked (GlcNAc...) asparagine glycosylation occurs at Asn-177. Ser-207 functions as the Charge relay system in the catalytic mechanism.

This sequence belongs to the peptidase S1 family. Granzyme subfamily. In terms of tissue distribution, highly and constitutively expressed in activated natural killer (NK) cells.

Its subcellular location is the secreted. It is found in the cytoplasmic granule. Cleaves peptide substrates after methionine, leucine, and norleucine. Physiological substrates include EZR, alpha-tubulins and the apoptosis inhibitor BIRC5/Survivin. Promotes caspase activation and subsequent apoptosis of target cells. The chain is Granzyme M (GZMM) from Homo sapiens (Human).